A 170-amino-acid polypeptide reads, in one-letter code: Peptide deformylase 2 (170 aa).

Positions 94 and 136 each coordinate Fe cation. Glu-137 is an active-site residue. His-140 provides a ligand contact to Fe cation.

Belongs to the polypeptide deformylase family. Fe(2+) is required as a cofactor.

The catalysed reaction is N-terminal N-formyl-L-methionyl-[peptide] + H2O = N-terminal L-methionyl-[peptide] + formate. In terms of biological role, removes the formyl group from the N-terminal Met of newly synthesized proteins. Requires at least a dipeptide for an efficient rate of reaction. N-terminal L-methionine is a prerequisite for activity but the enzyme has broad specificity at other positions. This Xanthomonas campestris pv. campestris (strain ATCC 33913 / DSM 3586 / NCPPB 528 / LMG 568 / P 25) protein is Peptide deformylase 2.